The following is a 422-amino-acid chain: Metallocarboxypeptidase A (422 aa).

A signal peptide spans 1-17 (MRSVLSFALLAANVVSA). The propeptide at 18–112 (AVLAPFDYSG…FEAYSAGYAP (95 aa)) is activation peptide. Residues 119–419 (SYHSYQDHLS…AGTVAMLKAV (301 aa)) form the Peptidase M14 domain. 2 residues coordinate Zn(2+): His-179 and Glu-182. Substrate-binding positions include 179 to 182 (HARE), Arg-237, and 254 to 255 (NR). Cys-248 and Cys-271 are disulfide-bonded. Residue His-309 coordinates Zn(2+). Residue 310 to 311 (SY) coordinates substrate. Glu-385 functions as the Proton donor/acceptor in the catalytic mechanism.

This sequence belongs to the peptidase M14 family. The cofactor is Zn(2+).

The protein localises to the secreted. In terms of biological role, extracellular metalloprotease that contributes to pathogenicity. The protein is Metallocarboxypeptidase A (MCPA) of Arthroderma otae (strain ATCC MYA-4605 / CBS 113480) (Microsporum canis).